The chain runs to 181 residues: Regulator of G-protein signaling 10 (181 aa).

A disordered region spans residues 1–35; sequence MFTRAVSRLSRKRPPSDIHDGDGSSSSGHQSLKST. Ser24 and Ser41 each carry phosphoserine. Residues 41–156 enclose the RGS domain; it reads SLENLLEDPE…LKSDLFLKHR (116 aa). The S-palmitoyl cysteine moiety is linked to residue Cys74. Residues 157–181 form a disordered region; that stretch reads RTEEEEEDPPDAQTAAKRASRIYNT. Residue Ser176 is modified to Phosphoserine.

In terms of assembly, interacts with GNAZ, GNAI1 and GNAI3. Associates specifically with the activated, GTP-bound forms of GNAZ and GNAI3.

The protein localises to the cytoplasm. The protein resides in the cytosol. Its subcellular location is the nucleus. Its function is as follows. Regulates G protein-coupled receptor signaling cascades, including signaling downstream of the muscarinic acetylcholine receptor CHRM2. Inhibits signal transduction by increasing the GTPase activity of G protein alpha subunits, thereby driving them into their inactive GDP-bound form. Modulates the activity of potassium channels that are activated in response to CHRM2 signaling. Activity on GNAZ is inhibited by palmitoylation of the G-protein. This Rattus norvegicus (Rat) protein is Regulator of G-protein signaling 10 (Rgs10).